Consider the following 371-residue polypeptide: Cytochrome b (371 aa).

A run of 4 helical transmembrane segments spans residues 25 to 45 (FGSM…FLAV), 69 to 90 (WMMQ…YIHI), 105 to 125 (WLSG…XXXX), and 170 to 190 (XXXX…LHIM). Residues H75 and H89 each contribute to the heme b site. Positions 174 and 188 each coordinate heme b. Residue H193 coordinates a ubiquinone. 4 helical membrane passes run 218–238 (YKDL…VSFL), 280–300 (LGGA…PFTH), 312–332 (IMQL…WAAT), and 339–358 (FTMI…ITNP).

Belongs to the cytochrome b family. The cytochrome bc1 complex contains 3 respiratory subunits (MT-CYB, CYC1 and UQCRFS1), 2 core proteins (UQCRC1 and UQCRC2) and probably 6 low-molecular weight proteins. Heme b serves as cofactor.

The protein resides in the mitochondrion inner membrane. Functionally, component of the ubiquinol-cytochrome c reductase complex (complex III or cytochrome b-c1 complex) that is part of the mitochondrial respiratory chain. The b-c1 complex mediates electron transfer from ubiquinol to cytochrome c. Contributes to the generation of a proton gradient across the mitochondrial membrane that is then used for ATP synthesis. This is Cytochrome b (MT-CYB) from Eryx jaculus (Javelin sand boa).